A 195-amino-acid polypeptide reads, in one-letter code: Imidazoleglycerol-phosphate dehydratase (195 aa).

The protein belongs to the imidazoleglycerol-phosphate dehydratase family.

It is found in the cytoplasm. The enzyme catalyses D-erythro-1-(imidazol-4-yl)glycerol 3-phosphate = 3-(imidazol-4-yl)-2-oxopropyl phosphate + H2O. The protein operates within amino-acid biosynthesis; L-histidine biosynthesis; L-histidine from 5-phospho-alpha-D-ribose 1-diphosphate: step 6/9. This Deinococcus deserti (strain DSM 17065 / CIP 109153 / LMG 22923 / VCD115) protein is Imidazoleglycerol-phosphate dehydratase.